The following is an 898-amino-acid chain: Protein translocase subunit SecA (898 aa).

ATP is bound by residues Gln-87, 105–109 (GEGKT), and Asp-512. Residues 855–865 (MQYQNNEGTSS) are compositionally biased toward polar residues. The interval 855-898 (MQYQNNEGTSSLHEKSEHKIGRNESCPCGSGKKYKHCHGSKAKY) is disordered. Residues 866-876 (LHEKSEHKIGR) show a composition bias toward basic and acidic residues. Zn(2+) is bound by residues Cys-880, Cys-882, Cys-891, and His-892. The span at 886–898 (KKYKHCHGSKAKY) shows a compositional bias: basic residues.

This sequence belongs to the SecA family. As to quaternary structure, monomer and homodimer. Part of the essential Sec protein translocation apparatus which comprises SecA, SecYEG and auxiliary proteins SecDF-YajC and YidC. The cofactor is Zn(2+).

It localises to the cell inner membrane. Its subcellular location is the cytoplasm. The enzyme catalyses ATP + H2O + cellular proteinSide 1 = ADP + phosphate + cellular proteinSide 2.. In terms of biological role, part of the Sec protein translocase complex. Interacts with the SecYEG preprotein conducting channel. Has a central role in coupling the hydrolysis of ATP to the transfer of proteins into and across the cell membrane, serving both as a receptor for the preprotein-SecB complex and as an ATP-driven molecular motor driving the stepwise translocation of polypeptide chains across the membrane. The chain is Protein translocase subunit SecA from Histophilus somni (strain 2336) (Haemophilus somnus).